The chain runs to 414 residues: Lysocardiolipin acyltransferase 1 (414 aa).

2 helical membrane passes run 47–67 (FILTLFWGSFFGSIFMLSPFL) and 86–106 (ATWLTLPVALLETMFGVKVII). An HXXXXD motif motif is present at residues 123 to 128 (HRTRMD). K221 is modified (N6-acetyllysine). The next 2 membrane-spanning stretches (helical) occupy residues 340–360 (LRVLVVKLLSILYWTLFSPAM) and 362–382 (LLIYLYSLVKWYFIITIVIFV).

It belongs to the 1-acyl-sn-glycerol-3-phosphate acyltransferase family. Expressed at higher level in heart, kidney and pancreas than in brain, spleen, liver, lung, small intestine and placenta.

It is found in the endoplasmic reticulum membrane. It catalyses the reaction a 1-acyl-sn-glycero-3-phosphate + an acyl-CoA = a 1,2-diacyl-sn-glycero-3-phosphate + CoA. It carries out the reaction a 1-acyl-sn-glycero-3-phospho-(1D-myo-inositol) + an acyl-CoA = a 1,2-diacyl-sn-glycero-3-phospho-(1D-myo-inositol) + CoA. The catalysed reaction is 1-acyl-sn-glycero-3-phospho-(1'-sn-glycerol) + an acyl-CoA = a 1,2-diacyl-sn-glycero-3-phospho-(1'-sn-glycerol) + CoA. The enzyme catalyses 1-hexadecanoyl-sn-glycero-3-phosphate + (9Z)-octadecenoyl-CoA = 1-hexadecanoyl-2-(9Z-octadecenoyl)-sn-glycero-3-phosphate + CoA. It catalyses the reaction 1-(9Z-octadecenoyl)-sn-glycero-3-phosphate + (9Z)-octadecenoyl-CoA = 1,2-di-(9Z-octadecenoyl)-sn-glycero-3-phosphate + CoA. It carries out the reaction 1-(9Z,12Z)-octadecadienoyl-sn-glycero-3-phosphate + (9Z)-octadecenoyl-CoA = 1-(9Z,12Z)-octadecadienoyl-2-(9Z)-octadecenoyl-sn-glycero-3-phosphate + CoA. The catalysed reaction is 1-(9Z,12Z,15Z)-octadecatrienoyl-sn-glycero-3-phosphate + (9Z)-octadecenoyl-CoA = 1-(9Z,12Z,15Z)-octadecatrienoyl-2-(9Z)-octadecenoyl-sn-glycero-3-phosphate + CoA. The enzyme catalyses 1-(9Z-octadecenoyl)-sn-glycero-3-phosphate + hexadecanoyl-CoA = 1-(9Z)-octadecenoyl-2-hexadecanoyl-sn-glycero-3-phosphate + CoA. It catalyses the reaction 1-(9Z-octadecenoyl)-sn-glycero-3-phosphate + octadecanoyl-CoA = 1-(9Z-octadecenoyl)-2-octadecanoyl-sn-glycero-3-phosphate + CoA. It carries out the reaction 1-acyl-sn-glycero-3-phospho-(1'-sn-glycerol) + (9Z)-octadecenoyl-CoA = 1-acyl-2-(9Z-octadecenoyl)-sn-glycero-3-phospho-(1'-sn-glycerol) + CoA. The catalysed reaction is a 1-acyl-sn-glycero-3-phospho-(1D-myo-inositol) + (9Z)-octadecenoyl-CoA = a 1-acyl-2-(9Z-octadecenoyl)-sn-glycero-3-phospho-(1D-myo-inositol) + CoA. The enzyme catalyses 1-hexadecanoyl-sn-glycero-3-phospho-(1D-myo-inositol) + hexadecanoyl-CoA = 1,2-dihexadecanoyl-sn-glycero-3-phospho-(1D-myo-inositol) + CoA. It catalyses the reaction 1-hexadecanoyl-sn-glycero-3-phospho-(1D-myo-inositol) + octadecanoyl-CoA = 1-hexadecanoyl-2-octadecanoyl-sn-glycero-3-phospho-(1D-myo-inositol) + CoA. It carries out the reaction 1-hexadecanoyl-sn-glycero-3-phospho-(1D-myo-inositol) + (9Z)-octadecenoyl-CoA = 1-hexadecanoyl-2-(9Z-octadecenoyl)-sn-glycero-3-phospho-(1D-myo-inositol) + CoA. The catalysed reaction is 1-hexadecanoyl-sn-glycero-3-phospho-(1D-myo-inositol) + (9Z,12Z)-octadecadienoyl-CoA = 1-hexadecanoyl-2-(9Z,12Z-octadecadienoyl)-sn-glycero-3-phospho-(1D-myo-inositol) + CoA. The enzyme catalyses 1-hexadecanoyl-sn-glycero-3-phospho-(1D-myo-inositol) + (5Z,8Z,11Z,14Z)-eicosatetraenoyl-CoA = 1-hexadecanoyl-2-(5Z,8Z,11Z,14Z-eicosatetraenoyl)-sn-glycero-3-phospho-D-myo-inositol + CoA. It catalyses the reaction 1-hexadecanoyl-sn-glycero-3-phospho-(1'-sn-glycerol) + hexadecanoyl-CoA = 1,2-dihexadecanoyl-sn-glycero-3-phospho-(1'-sn-glycerol) + CoA. It carries out the reaction 1-hexadecanoyl-sn-glycero-3-phospho-(1'-sn-glycerol) + octadecanoyl-CoA = 1-hexadecanoyl-2-octadecanoyl-sn-glycero-3-phospho-(1'-sn-glycerol) + CoA. The catalysed reaction is 1-hexadecanoyl-sn-glycero-3-phospho-(1'-sn-glycerol) + (9Z)-octadecenoyl-CoA = 1-hexadecanoyl-2-(9Z-octadecenoyl)-sn-glycero-3-phospho-(1'-sn-glycerol) + CoA. The enzyme catalyses 1-hexadecanoyl-sn-glycero-3-phospho-(1'-sn-glycerol) + (9Z,12Z)-octadecadienoyl-CoA = 1-hexadecanoyl-2-(9Z,12Z-octadecadienoyl)-sn-glycero-3-phospho-(1'-sn-glycerol) + CoA. It catalyses the reaction 1-tetradecanoyl-sn-glycero-3-phospho-(1'-sn-glycerol) + (9Z)-octadecenoyl-CoA = 1-tetradecanoyl-2-(9Z-octadecenoyl)-sn-glycero-3-phospho-(1'-sn-glycerol) + CoA. It carries out the reaction 1-octadecanoyl-sn-glycero-3-phospho-(1'-sn-glycerol) + (9Z)-octadecenoyl-CoA = 1-octadecanoyl-2-(9Z-octadecenoyl)-sn-glycero-3-phospho-(1'-sn-glycerol) + CoA. The catalysed reaction is 1-(9Z-octadecenoyl)-sn-glycero-3-phospho-(1'-sn-glycerol) + (9Z)-octadecenoyl-CoA = 1,2-di-(9Z-octadecenoyl)-sn-glycero-3-phospho-(1'-sn-glycerol) + CoA. The enzyme catalyses 1-hexadecanoyl-sn-glycero-3-phospho-(1D-myo-inositol) + dodecanoyl-CoA = 1-hexadecanoyl-2-dodecanoyl-sn-glycero-3-phospho-(1D-myo-inositol) + CoA. It catalyses the reaction 1',3'-bis-[1-acyl-sn-glycero-3-phospho]-glycerol + (9Z)-octadecenoyl-CoA = 1'-[1-acyl-2-(9Z)-octadecenoyl-sn-glycero-3-phospho],3'-[1-acyl,2-hydroxy-sn-glycero-3-phospho]-glycerol + CoA. It carries out the reaction 1'-[1,2-diacyl-sn-glycero-3-phospho],3'-[1-acyl-sn-glycero-3-phospho]-glycerol + (9Z)-octadecenoyl-CoA = 1'-[1,2-diacyl-sn-glycero-3-phospho],3'-[1-acyl,2-(9Z)-octadecenoyl-sn-glycero-3-phospho]-glycerol + CoA. The catalysed reaction is 1'-[1,2-diacyl-sn-glycero-3-phospho],3'-[1-acyl-sn-glycero-3-phospho]-glycerol + (9Z,12Z)-octadecadienoyl-CoA = 1'-[1,2-diacyl-sn-glycero-3-phospho],3'-[1-acyl,2-(9Z,12Z)-octadecadienoyl-sn-glycero-3-phospho]-glycerol + CoA. The enzyme catalyses 1'-[1,2-diacyl-sn-glycero-3-phospho],3'-[1-acyl-sn-glycero-3-phospho]-glycerol + dodecanoyl-CoA = 1'-[1,2-diacyl-sn-glycero-3-phospho],3'-[1-acyl,2-dodecanoyl-sn-glycero-3-phospho]-glycerol + CoA. It catalyses the reaction 1',3'-bis-[1-acyl-sn-glycero-3-phospho]-glycerol + dodecanoyl-CoA = 1'-[1-acyl-2-dodecanoyl-sn-glycero-3-phospho],3'-[1-acyl,2-hydroxy-sn-glycero-3-phospho]-glycerol + CoA. It carries out the reaction a 1-acyl-sn-glycero-3-phosphate + (9Z)-octadecenoyl-CoA = a 1-acyl-2-(9Z-octadecenoyl)-sn-glycero-3-phosphate + CoA. The catalysed reaction is 1',3'-bis-[1-acyl-sn-glycero-3-phospho]-glycerol + (9Z,12Z)-octadecadienoyl-CoA = 1'-[1-acyl-2-(9Z,12Z)-octadecadienoyl-sn-glycero-3-phospho],3'-[1-acyl,2-hydroxy-sn-glycero-3-phospho]-glycerol + CoA. The enzyme catalyses 1',3'-bis-[1-acyl-sn-glycero-3-phospho]-glycerol + hexadecanoyl-CoA = 1'-[1-acyl-2-hexadecanoyl-sn-glycero-3-phospho],3'-[1-acyl,2-hydroxy-sn-glycero-3-phospho]-glycerol + CoA. It catalyses the reaction 1',3'-bis-[1-acyl-sn-glycero-3-phospho]-glycerol + octadecanoyl-CoA = 1'-[1-acyl-2-octadecanoyl-sn-glycero-3-phospho],3'-[1-acyl,2-hydroxy-sn-glycero-3-phospho]-glycerol + CoA. It carries out the reaction 1'-[1,2-diacyl-sn-glycero-3-phospho],3'-[1-acyl-sn-glycero-3-phospho]-glycerol + octanoyl-CoA = 1'-[1,2-diacyl-sn-glycero-3-phospho],3'-[1-acyl,2-octanoyl-sn-glycero-3-phospho]-glycerol + CoA. The catalysed reaction is 1',3'-bis-[1-acyl-sn-glycero-3-phospho]-glycerol + octanoyl-CoA = 1'-[1-acyl-2-octanoyl-sn-glycero-3-phospho],3'-[1-acyl,2-hydroxy-sn-glycero-3-phospho]-glycerol + CoA. The enzyme catalyses 1'-[1,2-diacyl-sn-glycero-3-phospho],3'-[1-acyl-sn-glycero-3-phospho]-glycerol + hexadecanoyl-CoA = 1'-[1,2-diacyl-sn-glycero-3-phospho],3'-[1-acyl,2-hexadecanoyl-sn-glycero-3-phospho]-glycerol + CoA. It catalyses the reaction 1'-[1,2-diacyl-sn-glycero-3-phospho],3'-[1-acyl-sn-glycero-3-phospho]-glycerol + (5Z,8Z,11Z,14Z)-eicosatetraenoyl-CoA = 1'-[1,2-diacyl-sn-glycero-3-phospho],3'-[1-acyl,2-(5Z,8Z,11Z,14Z)-eicosatetraenoyl-sn-glycero-3-phospho]-glycerol + CoA. It carries out the reaction 1',3'-bis-[1-acyl-sn-glycero-3-phospho]-glycerol + (5Z,8Z,11Z,14Z)-eicosatetraenoyl-CoA = 1'-[1-acyl-2-(5Z,8Z,11Z,14Z)-eicosatetraenoyl-sn-glycero-3-phospho],3'-[1-acyl,2-hydroxy-sn-glycero-3-phospho]-glycerol + CoA. The catalysed reaction is a 1-acyl-sn-glycero-3-phospho-(1D-myo-inositol) + octadecanoyl-CoA = a 1-acyl-2-octadecanoyl-sn-glycero-3-phospho-(1D-myo-inositol) + CoA. The enzyme catalyses a 2-acyl-sn-glycero-3-phospho-D-myo-inositol + octadecanoyl-CoA = 1-octadecanoyl-2-acyl-sn-glycero-3-phospho-1D-myo-inositol + CoA. It functions in the pathway phospholipid metabolism; CDP-diacylglycerol biosynthesis; CDP-diacylglycerol from sn-glycerol 3-phosphate: step 2/3. Functionally, exhibits acyl-CoA:lysocardiolipin acyltransferase (ALCAT) activity; catalyzes the reacylation of lyso-cardiolipin to cardiolipin (CL), a key step in CL remodeling. Recognizes both monolysocardiolipin and dilysocardiolipin as substrates with a preference for linoleoyl-CoA and oleoyl-CoA as acyl donors. Also exhibits 1-acyl-sn-glycerol-3-phosphate acyltransferase activity (AGPAT) activity; converts 1-acyl-sn-glycerol-3- phosphate (lysophosphatidic acid or LPA) into 1,2-diacyl-sn-glycerol-3- phosphate (phosphatidic acid or PA) by incorporating an acyl moiety at the sn-2 position of the glycerol backbone. Possesses both lysophosphatidylinositol acyltransferase (LPIAT) and lysophosphatidylglycerol acyltransferase (LPGAT) activities. Required for establishment of the hematopoietic and endothelial lineages. The chain is Lysocardiolipin acyltransferase 1 (LCLAT1) from Homo sapiens (Human).